Consider the following 606-residue polypeptide: Proline--tRNA ligase (606 aa).

It belongs to the class-II aminoacyl-tRNA synthetase family. ProS type 1 subfamily. As to quaternary structure, homodimer.

The protein resides in the cytoplasm. The enzyme catalyses tRNA(Pro) + L-proline + ATP = L-prolyl-tRNA(Pro) + AMP + diphosphate. Functionally, catalyzes the attachment of proline to tRNA(Pro) in a two-step reaction: proline is first activated by ATP to form Pro-AMP and then transferred to the acceptor end of tRNA(Pro). As ProRS can inadvertently accommodate and process non-cognate amino acids such as alanine and cysteine, to avoid such errors it has two additional distinct editing activities against alanine. One activity is designated as 'pretransfer' editing and involves the tRNA(Pro)-independent hydrolysis of activated Ala-AMP. The other activity is designated 'posttransfer' editing and involves deacylation of mischarged Ala-tRNA(Pro). The misacylated Cys-tRNA(Pro) is not edited by ProRS. The protein is Proline--tRNA ligase of Kocuria rhizophila (strain ATCC 9341 / DSM 348 / NBRC 103217 / DC2201).